The sequence spans 343 residues: Nicotianamine synthase 3 (343 aa).

This sequence belongs to the nicotianamine synthase (NAS)-like family. As to expression, expressed in leaves.

The catalysed reaction is 3 S-adenosyl-L-methionine = nicotianamine + 3 S-methyl-5'-thioadenosine + 3 H(+). Functionally, synthesizes nicotianamine, a polyamine that is the first intermediate in the synthesis of the phytosiderophores of the mugineic acid type found in gramineae which serve as a sensor for the physiological iron status within the plant, and/or might be involved in the transport of iron. The polypeptide is Nicotianamine synthase 3 (NAS3) (Oryza sativa subsp. indica (Rice)).